The sequence spans 341 residues: KH domain-containing RNA-binding protein QKI (341 aa).

Residues 11–82 (PKPTPDYLMQ…PDAVGPIVQL (72 aa)) are qua1 domain; involved in homodimerization. The 67-residue stretch at 87–153 (YVPVKEYPDF…WEHLNEDLHV (67 aa)) folds into the KH domain. Positions 182-213 (AAEGEDSLKKMQLMELAILNGTYRDANIKSPA) are qua2 domain; involved in RNA binding. S188 bears the Phosphoserine mark. Position 227 is an omega-N-methylarginine (R227). R242 is subject to Asymmetric dimethylarginine; by CARM1; alternate. R242 is subject to Omega-N-methylarginine; alternate. An Omega-N-methylarginine modification is found at R256. The short motif at 276 to 279 (PPGP) is the SH3-binding element. The short motif at 324–330 (RVHPYQR) is the Nuclear localization signal element.

The protein belongs to the quaking family. In terms of assembly, homodimer; does not require RNA to homodimerize. Able to heterodimerize with BICC1. In terms of processing, methylated by PRMT1. Post-translationally, tyrosine phosphorylated at its C-terminus, probably by FYN. Phosphorylation leads to decreased mRNA-binding affinity, affecting transport and/or stabilization of MBP mRNA. Ubiquitinated by RNF6 in macrophages, leading to its degradation.

It is found in the nucleus. The protein resides in the cytoplasm. Its function is as follows. RNA reader protein, which recognizes and binds specific RNAs, thereby regulating RNA metabolic processes, such as pre-mRNA splicing, circular RNA (circRNA) formation, mRNA export, mRNA stability and/or translation. Involved in various cellular processes, such as mRNA storage into stress granules, apoptosis, lipid deposition, interferon response, glial cell fate and development. Binds to the 5'-NACUAAY-N(1,20)-UAAY-3' RNA core sequence. Acts as a mRNA modification reader that specifically recognizes and binds mRNA transcripts modified by internal N(7)-methylguanine (m7G). Promotes the formation of circular RNAs (circRNAs) during the epithelial to mesenchymal transition and in cardiomyocytes: acts by binding to sites flanking circRNA-forming exons. CircRNAs are produced by back-splicing circularization of pre-mRNAs. Plays a central role in myelinization via 3 distinct mechanisms. First, acts by protecting and promoting stability of target mRNAs such as MBP, SIRT2 and CDKN1B, which promotes oligodendrocyte differentiation. Second, participates in mRNA transport by regulating the nuclear export of MBP mRNA. Finally, indirectly regulates mRNA splicing of MAG pre-mRNA during oligodendrocyte differentiation by acting as a negative regulator of MAG exon 12 alternative splicing: acts by binding to HNRNPA1 mRNA splicing factor, preventing its translation. Involved in microglia differentiation and remyelination by regulating microexon alternative splicing of the Rho GTPase pathway. Involved in macrophage differentiation: promotes monocyte differentiation by regulating pre-mRNA splicing in naive peripheral blood monocytes. Acts as an important regulator of muscle development: required for the contractile function of cardiomyocytes by regulating alternative splicing of cardiomyocyte transcripts. Acts as a negative regulator of thermogenesis by decreasing stability, nuclear export and translation of mRNAs encoding PPARGC1A and UCP1. Also required for visceral endoderm function and blood vessel development. May also play a role in smooth muscle development. In addition to its RNA-binding activity, also acts as a nuclear transcription coactivator for SREBF2/SREBP2. The sequence is that of KH domain-containing RNA-binding protein QKI from Bos taurus (Bovine).